A 166-amino-acid polypeptide reads, in one-letter code: Mitochondrial translation release factor in rescue (166 aa).

The transit peptide at 1 to 35 directs the protein to the mitochondrion; it reads MSTVGLFHFPTPLTRICPAPWGLRLWEKLTLLSPG. Residues 57 to 121 are GGQ domain; the sequence is ENELEEQFVK…LQEKVDVFYN (65 aa). Positions 71-73 match the GGQ motif; sequence GGQ. Position 73 is an N5-methylglutamine (Q73). Positions 122 to 148 are disordered; sequence GENSPVHKEKREAAKKKQERKKRAKET. The segment covering 126 to 137 has biased composition (basic and acidic residues); sequence PVHKEKREAAKK. Residues 127 to 160 adopt a coiled-coil conformation; the sequence is VHKEKREAAKKKQERKKRAKETLEKKKLLKELWE.

It belongs to the prokaryotic/mitochondrial release factor family. Interacts (via C-terminus) with MTRES1 (via S4 domain). Associates with mitoribosomal S39 large subunit, peptidyl tRNA and nascent chain. In terms of processing, methylation of glutamine in the GGQ triplet by HEMK1. Expressed in all areas of the brain tested.

It is found in the mitochondrion. Functionally, part of a mitoribosome-associated quality control pathway that prevents aberrant translation by responding to interruptions during elongation. As heterodimer with MTRES1, ejects the unfinished nascent chain and peptidyl transfer RNA (tRNA), respectively, from stalled ribosomes. Recruitment of mitoribosome biogenesis factors to these quality control intermediates suggests additional roles for MTRES1 and MTRF during mitoribosome rescue. The protein is Mitochondrial translation release factor in rescue of Homo sapiens (Human).